Consider the following 226-residue polypeptide: Deoxyribose-phosphate aldolase (226 aa).

Aspartate 93 (proton donor/acceptor) is an active-site residue. Lysine 159 functions as the Schiff-base intermediate with acetaldehyde in the catalytic mechanism. The Proton donor/acceptor role is filled by lysine 189.

This sequence belongs to the DeoC/FbaB aldolase family. DeoC type 1 subfamily.

It is found in the cytoplasm. The catalysed reaction is 2-deoxy-D-ribose 5-phosphate = D-glyceraldehyde 3-phosphate + acetaldehyde. Its pathway is carbohydrate degradation; 2-deoxy-D-ribose 1-phosphate degradation; D-glyceraldehyde 3-phosphate and acetaldehyde from 2-deoxy-alpha-D-ribose 1-phosphate: step 2/2. In terms of biological role, catalyzes a reversible aldol reaction between acetaldehyde and D-glyceraldehyde 3-phosphate to generate 2-deoxy-D-ribose 5-phosphate. The polypeptide is Deoxyribose-phosphate aldolase (Mycobacterium marinum (strain ATCC BAA-535 / M)).